A 70-amino-acid chain; its full sequence is MPNIRVKENEPFEVAIRRFKRTVEKTGLLTELRAREFYEKPTTERKRKAAAAVKRQHKRLRSLTLPPKLY.

The segment at 43–70 (TERKRKAAAAVKRQHKRLRSLTLPPKLY) is disordered. The segment covering 45–61 (RKRKAAAAVKRQHKRLR) has biased composition (basic residues).

Belongs to the bacterial ribosomal protein bS21 family.

This is Small ribosomal subunit protein bS21 from Dechloromonas aromatica (strain RCB).